We begin with the raw amino-acid sequence, 343 residues long: tRNA N6-adenosine threonylcarbamoyltransferase (343 aa).

Fe cation is bound by residues His108 and His112. Residues 129–133 (LISGG), Asp161, Glu178, and Ser258 contribute to the substrate site. Asp286 is a binding site for Fe cation.

It belongs to the KAE1 / TsaD family. The cofactor is Fe(2+).

It is found in the cytoplasm. It carries out the reaction L-threonylcarbamoyladenylate + adenosine(37) in tRNA = N(6)-L-threonylcarbamoyladenosine(37) in tRNA + AMP + H(+). In terms of biological role, required for the formation of a threonylcarbamoyl group on adenosine at position 37 (t(6)A37) in tRNAs that read codons beginning with adenine. Is probably involved in the transfer of the threonylcarbamoyl moiety of threonylcarbamoyl-AMP (TC-AMP) to the N6 group of A37. The protein is tRNA N6-adenosine threonylcarbamoyltransferase of Pyrobaculum aerophilum (strain ATCC 51768 / DSM 7523 / JCM 9630 / CIP 104966 / NBRC 100827 / IM2).